The primary structure comprises 60 residues: Short neurotoxin 1 (60 aa).

4 disulfide bridges follow: C3-C22, C17-C39, C41-C52, and C53-C58.

The protein belongs to the three-finger toxin family. Short-chain subfamily. Type I alpha-neurotoxin sub-subfamily. Expressed by the venom gland.

The protein localises to the secreted. Its function is as follows. Binds to muscle nicotinic acetylcholine receptor (nAChR) and inhibit acetylcholine from binding to the receptor, thereby impairing neuromuscular transmission. This chain is Short neurotoxin 1, found in Hydrophis ornatus (Ornate reef seasnake).